A 2299-amino-acid chain; its full sequence is Acetyl-CoA carboxylase dmxL1 (2299 aa).

A compositionally biased stretch (low complexity) spans 21-39 (TSIPASVPASAPPSSSAPH). The segment at 21 to 41 (TSIPASVPASAPPSSSAPHAA) is disordered. The 509-residue stretch at 75-583 (VITNVLIANN…TTGWLDELIT (509 aa)) folds into the Biotin carboxylation domain. One can recognise an ATP-grasp 1 domain in the interval 227–424 (QVAIDADGIV…LPAAQLQIAM (198 aa)). 258–315 (AKEIGFPVMIKASEGGGGKGIRKCEQEEGFEALYNAASSEIPGSPIFIMKLAGNARHL) lines the ATP pocket. Mg(2+)-binding residues include Glu-381, Glu-395, and Asn-397. Mn(2+) contacts are provided by Glu-381, Glu-395, and Asn-397. In terms of domain architecture, Biotinyl-binding spans 710 to 784 (LEQENDPTQL…EPGDVLGILT (75 aa)). N6-biotinyllysine is present on Lys-751. Residues 1159 to 1208 (DMEMSSQLSTPSTPATPPTPPYENGKQSKGVGSISDMSNLIENPDKEPTR) form a disordered region. The CoA carboxyltransferase N-terminal domain maps to 1539–1887 (PTKALEWLQP…KKNTLVPIGP (349 aa)). Positions 1891–2205 (PWDRDIVCSP…EEHILKRIAT (315 aa)) constitute a CoA carboxyltransferase C-terminal domain.

The cofactor is biotin. Requires Mg(2+) as cofactor. It depends on Mn(2+) as a cofactor.

It catalyses the reaction hydrogencarbonate + acetyl-CoA + ATP = malonyl-CoA + ADP + phosphate + H(+). It carries out the reaction N(6)-biotinyl-L-lysyl-[protein] + hydrogencarbonate + ATP = N(6)-carboxybiotinyl-L-lysyl-[protein] + ADP + phosphate + H(+). It functions in the pathway secondary metabolite biosynthesis. The protein operates within lipid metabolism; malonyl-CoA biosynthesis; malonyl-CoA from acetyl-CoA: step 1/1. Functionally, acetyl-CoA carboxylase; part of the gene cluster that mediates the biosynthesis of the dimeric xanthones cryptosporioptides. The pathway begins with the synthesis of atrochrysone thioester by the polyketide synthase dmx-nrPKS. The atrochrysone carboxyl ACP thioesterase dmxR1 then breaks the thioester bond and releases the atrochrysone carboxylic acid from dmx-nrPKS. Atrochrysone carboxylic acid is decarboxylated by the decarboxylase dmxR15, and oxidized by the anthrone oxygenase dmxR16 to yield emodin. Emodin is then reduced to emodin hydroquinone by the oxidoreductase dmxR7. A-ring reduction by the short chain dehydrogenase dmxR18, dehydration by the scytalone dehydratase-like protein dmxR17 and probable spontaneous re-oxidation, results in overall deoxygenation to chrysophanol. Baeyer-Villiger oxidation by the Baeyer-Villiger monooxygenase (BVMO) dmxR6 then yields monodictylactone in equilibrium with monodictyphenone. In the case of the cryptosporioptides biosynthesis, monodictylactone is reduced at C-12 to an alcohol (by the short chain dehydrogenases dmxR12 or dmxR8) and hydroxylated at C-5 by dmxR9, yielding the electron-rich aromatic which could eliminate H(2)O to form the ortho-quinonemethide, followed by tautomerisation to paraquinone and complete the formal reduction to produce the 10-methylgroup. Conjugate addition of C-4a-OH to the resulting paraquinone by the monooxygenase dmxR10 then gives cyclohexadienone, which is then reduced at C-5 by the short chain dehydrogenase dmxR3 to give the dihydroxanthone. The 6,7-epoxide in the cryptosporioptides could be introduced by the cytochrome P450 monooxygenase dmxL3. The highly reducing PKS dmxL2 manufactures butyrate, which is further carboxylated by dmxL1 to form ethylmalonate. It is not yet clear whether the carboxylation occurs while the butyrate is attached to the ACP of dmxL2, but this unusual fungal metabolite could then be esterified to O-5 by the O-acetyltransferase dmxR13. Finally, dimerization performed by dmxR5 gives the observed dimers cryptosporioptides A, B and C as the final products of the pathway. This chain is Acetyl-CoA carboxylase dmxL1, found in Cryptosporiopsis sp. (strain 8999).